A 1040-amino-acid chain; its full sequence is Multidrug resistance protein MdtB (1040 aa).

Transmembrane regions (helical) follow at residues 16 to 36 (FIMR…AGII), 347 to 367 (LMMA…NIPA), 369 to 389 (IIPG…MVFL), 396 to 416 (LTLM…IVVI), 440 to 460 (IGFT…PLLF), 472 to 492 (FAIT…TLTP), 537 to 557 (WLTL…WVFI), 863 to 883 (LGST…VLGI), 888 to 908 (FIHP…ALLA), 911 to 931 (IAGS…IGIV), 968 to 988 (ILMT…STGV), and 998 to 1018 (IGMV…TPVI).

This sequence belongs to the resistance-nodulation-cell division (RND) (TC 2.A.6) family. MdtB subfamily. As to quaternary structure, part of a tripartite efflux system composed of MdtA, MdtB and MdtC. MdtB forms a heteromultimer with MdtC.

Its subcellular location is the cell inner membrane. The sequence is that of Multidrug resistance protein MdtB from Shigella boydii serotype 18 (strain CDC 3083-94 / BS512).